The primary structure comprises 892 residues: Putative leucine-rich repeat receptor-like serine/threonine-protein kinase At2g04300 (892 aa).

An N-terminal signal peptide occupies residues 1–26; it reads MKTHPQAILLCVLFFITFGLLHVVEA. Topologically, residues 27 to 523 are extracellular; that stretch reads GNQEGFISLD…GAKKKNVVVL (497 aa). Asn99, Asn186, Asn241, Asn267, and Asn294 each carry an N-linked (GlcNAc...) asparagine glycan. 4 LRR repeats span residues 375–396, 399–422, 423–444, and 447–467; these read IKNI…PCVP, FMWD…FLNL, SSSH…LQNL, and SNNN…SLLV. Asn407, Asn421, Asn437, Asn450, and Asn469 each carry an N-linked (GlcNAc...) asparagine glycan. The chain crosses the membrane as a helical span at residues 524 to 544; the sequence is VVVSIALVVVLGSALALFLVF. Over 545 to 892 the chain is Cytoplasmic; that stretch reads RKRKTPRNEV…FGTEYTPEAR (348 aa). Thr573 bears the Phosphothreonine mark. Residues 582-855 form the Protein kinase domain; the sequence is NNFEKILGKG…QVVIELNECL (274 aa). Residues 588–596 and Lys610 contribute to the ATP site; that span reads LGKGGFGMV. A Phosphotyrosine modification is found at Tyr655. Asp707 serves as the catalytic Proton acceptor. Residues Thr742 and Thr747 each carry the phosphothreonine modification. Tyr755 carries the post-translational modification Phosphotyrosine.

It belongs to the protein kinase superfamily. Ser/Thr protein kinase family.

It localises to the cell membrane. It carries out the reaction L-seryl-[protein] + ATP = O-phospho-L-seryl-[protein] + ADP + H(+). The catalysed reaction is L-threonyl-[protein] + ATP = O-phospho-L-threonyl-[protein] + ADP + H(+). The sequence is that of Putative leucine-rich repeat receptor-like serine/threonine-protein kinase At2g04300 from Arabidopsis thaliana (Mouse-ear cress).